Consider the following 365-residue polypeptide: S-adenosylmethionine:tRNA ribosyltransferase-isomerase (365 aa).

This sequence belongs to the QueA family. In terms of assembly, monomer.

It is found in the cytoplasm. It carries out the reaction 7-aminomethyl-7-carbaguanosine(34) in tRNA + S-adenosyl-L-methionine = epoxyqueuosine(34) in tRNA + adenine + L-methionine + 2 H(+). Its pathway is tRNA modification; tRNA-queuosine biosynthesis. Its function is as follows. Transfers and isomerizes the ribose moiety from AdoMet to the 7-aminomethyl group of 7-deazaguanine (preQ1-tRNA) to give epoxyqueuosine (oQ-tRNA). This chain is S-adenosylmethionine:tRNA ribosyltransferase-isomerase, found in Rickettsia rickettsii (strain Iowa).